The following is a 104-amino-acid chain: Large ribosomal subunit protein bL27 (104 aa).

Positions Met-1 to Phe-15 are excised as a propeptide.

This sequence belongs to the bacterial ribosomal protein bL27 family. The N-terminus is cleaved by ribosomal processing cysteine protease Prp.

The chain is Large ribosomal subunit protein bL27 from Mycoplasma pneumoniae (strain ATCC 29342 / M129 / Subtype 1) (Mycoplasmoides pneumoniae).